The sequence spans 177 residues: Acireductone dioxygenase (177 aa).

Residues His99, His101, Glu105, and His143 each coordinate Fe(2+). Residues His99, His101, Glu105, and His143 each contribute to the Ni(2+) site.

The protein belongs to the acireductone dioxygenase (ARD) family. In terms of assembly, monomer. It depends on Fe(2+) as a cofactor. Requires Ni(2+) as cofactor.

It carries out the reaction 1,2-dihydroxy-5-(methylsulfanyl)pent-1-en-3-one + O2 = 3-(methylsulfanyl)propanoate + CO + formate + 2 H(+). The enzyme catalyses 1,2-dihydroxy-5-(methylsulfanyl)pent-1-en-3-one + O2 = 4-methylsulfanyl-2-oxobutanoate + formate + 2 H(+). Its pathway is amino-acid biosynthesis; L-methionine biosynthesis via salvage pathway; L-methionine from S-methyl-5-thio-alpha-D-ribose 1-phosphate: step 5/6. Its function is as follows. Catalyzes 2 different reactions between oxygen and the acireductone 1,2-dihydroxy-3-keto-5-methylthiopentene (DHK-MTPene) depending upon the metal bound in the active site. Fe-containing acireductone dioxygenase (Fe-ARD) produces formate and 2-keto-4-methylthiobutyrate (KMTB), the alpha-ketoacid precursor of methionine in the methionine recycle pathway. Ni-containing acireductone dioxygenase (Ni-ARD) produces methylthiopropionate, carbon monoxide and formate, and does not lie on the methionine recycle pathway. The protein is Acireductone dioxygenase of Leptospira borgpetersenii serovar Hardjo-bovis (strain L550).